Reading from the N-terminus, the 125-residue chain is MIKKTSGTEIRALARHIGMSAQKARRVIDQIRGCSYEQTLMILELMPYRACYPIFKLVYSAAANASHNRGLKEADLFISKAEVNEGVIVKRLKPRARGRSYPIKRPTCHITIVLSERPNFNFKNI.

This sequence belongs to the universal ribosomal protein uL22 family. Part of the 50S ribosomal subunit.

The protein localises to the plastid. It localises to the chloroplast. Functionally, this protein binds specifically to 23S rRNA. The globular domain of the protein is located near the polypeptide exit tunnel on the outside of the subunit, while an extended beta-hairpin is found that lines the wall of the exit tunnel in the center of the 70S ribosome. This is Large ribosomal subunit protein uL22c (rpl22) from Nymphaea alba (White water-lily).